The following is a 198-amino-acid chain: uncharacterized protein (198 aa).

The 61-residue stretch at 11–71 folds into the HTH tetR-type domain; that stretch reads EGTHKAILSA…DSFLSTATDR (61 aa). A DNA-binding region (H-T-H motif) is located at residues 34-53; that stretch reads TVDKIAERAKVSKATIYKWW.

This is an uncharacterized protein from Bacillus subtilis (strain 168).